Reading from the N-terminus, the 301-residue chain is MRIAVLSRNPNLYSTRRLKEAGEARGHTVDIIDTLHCYMDITMSRPAVRYHGEELPYYDAVIPRIGASITFYGTAVVRQFEMMGTFCVNESVAISRSRDKLRSLQLLSRKGVGLPRTGFANRPDKIKDLIKNVGGAPLVIKLLEGTQGIGVVLADTNKTAESILEAFMGLNANILVQEYIKEAGGADIRCFVVGNKVVAAMKRQGAEGEFRSNLHRGGSATLVRLSKEERATAVNAAKVMGLNVCGVDILQSNNGPVVMEVNSSPGLEGIENATNKDVAALVMEFIEANAKPNNTKTRGKG.

An ATP-grasp domain is found at 104–287 (LQLLSRKGVG…VAALVMEFIE (184 aa)). ATP-binding positions include Lys-141, 178-179 (EY), Asp-187, and 211-213 (RSN). Mg(2+)-binding residues include Asp-248, Glu-260, and Asn-262. Residues Asp-248, Glu-260, and Asn-262 each contribute to the Mn(2+) site.

It belongs to the RimK family. The cofactor is Mg(2+). Mn(2+) is required as a cofactor.

In Saccharophagus degradans (strain 2-40 / ATCC 43961 / DSM 17024), this protein is Probable alpha-L-glutamate ligase.